Here is a 166-residue protein sequence, read N- to C-terminus: Large ribosomal subunit protein uL10 (166 aa).

It belongs to the universal ribosomal protein uL10 family. In terms of assembly, part of the ribosomal stalk of the 50S ribosomal subunit. The N-terminus interacts with L11 and the large rRNA to form the base of the stalk. The C-terminus forms an elongated spine to which L12 dimers bind in a sequential fashion forming a multimeric L10(L12)X complex.

In terms of biological role, forms part of the ribosomal stalk, playing a central role in the interaction of the ribosome with GTP-bound translation factors. This chain is Large ribosomal subunit protein uL10, found in Pseudomonas putida (strain W619).